The following is a 110-amino-acid chain: MPNGKADEVWFVYLLRCADGTLYCGVTNNIERRLTQHHRGRGARYTRGRAPFILLGHAPFPGRGEAQRVEYRIKRQPTDQKLACLATIGGDAFVAGALQSAPAEGITWNP.

The GIY-YIG domain maps to 8 to 83 (EVWFVYLLRC…KRQPTDQKLA (76 aa)).

This sequence belongs to the UPF0213 family.

The sequence is that of UPF0213 protein DVU_3309 from Nitratidesulfovibrio vulgaris (strain ATCC 29579 / DSM 644 / CCUG 34227 / NCIMB 8303 / VKM B-1760 / Hildenborough) (Desulfovibrio vulgaris).